The following is a 249-amino-acid chain: Large ribosomal subunit protein uL10m (249 aa).

A mitochondrion-targeting transit peptide spans 1 to 31; that stretch reads MLQLRFMPGWVPRNGFFGLKETIGTVHKRFY. The tract at residues 226 to 249 is disordered; it reads SHNDNQKPKEDVESTTDAESKGSK.

It belongs to the universal ribosomal protein uL10 family. In terms of assembly, component of the mitochondrial large ribosomal subunit (mt-LSU). Mature yeast 74S mitochondrial ribosomes consist of a small (37S) and a large (54S) subunit. The 37S small subunit contains a 15S ribosomal RNA (15S mt-rRNA) and 34 different proteins. The 54S large subunit contains a 21S rRNA (21S mt-rRNA) and 46 different proteins.

It is found in the mitochondrion. In terms of biological role, component of the mitochondrial ribosome (mitoribosome), a dedicated translation machinery responsible for the synthesis of mitochondrial genome-encoded proteins, including at least some of the essential transmembrane subunits of the mitochondrial respiratory chain. The mitoribosomes are attached to the mitochondrial inner membrane and translation products are cotranslationally integrated into the membrane. The sequence is that of Large ribosomal subunit protein uL10m (MRPL11) from Saccharomyces cerevisiae (strain ATCC 204508 / S288c) (Baker's yeast).